Reading from the N-terminus, the 880-residue chain is Valine--tRNA ligase (880 aa).

A 'HIGH' region motif is present at residues 48–58 (PNITGKLHLGH). Positions 527-531 (KMSKS) match the 'KMSKS' region motif. Lysine 530 is an ATP binding site. 2 coiled-coil regions span residues 717-741 (KEEL…AIRN) and 810-880 (LFDL…KSLK).

Belongs to the class-I aminoacyl-tRNA synthetase family. ValS type 1 subfamily. Monomer.

The protein resides in the cytoplasm. The enzyme catalyses tRNA(Val) + L-valine + ATP = L-valyl-tRNA(Val) + AMP + diphosphate. Catalyzes the attachment of valine to tRNA(Val). As ValRS can inadvertently accommodate and process structurally similar amino acids such as threonine, to avoid such errors, it has a 'posttransfer' editing activity that hydrolyzes mischarged Thr-tRNA(Val) in a tRNA-dependent manner. The polypeptide is Valine--tRNA ligase (Clostridium tetani (strain Massachusetts / E88)).